The following is a 445-amino-acid chain: UPF0210 protein Sez_0396 (445 aa).

Belongs to the UPF0210 family. Homodimer.

The chain is UPF0210 protein Sez_0396 from Streptococcus equi subsp. zooepidemicus (strain MGCS10565).